Reading from the N-terminus, the 399-residue chain is Elongation factor Tu (399 aa).

The 195-residue stretch at 10-204 folds into the tr-type G domain; the sequence is KPHVNIGTIG…AVDASIPEPE (195 aa). The tract at residues 19–26 is G1; it reads GHVDHGKT. A GTP-binding site is contributed by 19–26; sequence GHVDHGKT. Thr26 is a binding site for Mg(2+). A G2 region spans residues 60–64; it reads GITIN. The segment at 81 to 84 is G3; that stretch reads DCPG. GTP is bound by residues 81 to 85 and 136 to 139; these read DCPGH and NKCD. Residues 136–139 are G4; the sequence is NKCD. The segment at 174–176 is G5; the sequence is SGL.

It belongs to the TRAFAC class translation factor GTPase superfamily. Classic translation factor GTPase family. EF-Tu/EF-1A subfamily. Monomer.

It localises to the cytoplasm. It catalyses the reaction GTP + H2O = GDP + phosphate + H(+). Its function is as follows. GTP hydrolase that promotes the GTP-dependent binding of aminoacyl-tRNA to the A-site of ribosomes during protein biosynthesis. This Prochlorococcus marinus (strain NATL1A) protein is Elongation factor Tu.